We begin with the raw amino-acid sequence, 452 residues long: MEKRVEKRRIVLVPVAAQGHVTPMMQLGKALQSKGFLITVAQRQFNQIGSSLQHFPGFDFVTIPESLPQSESKKLGPAEYLMNLNKTSEASFKECISQLSMQQGNDIACIIYDKLMYFCEAAAKEFKIPSVIFSTSSATIQVCYCVLSELSAEKFLIDMKDPEKQDKVLEGLHPLRYKDLPTSGFGPLEPLLEMCREVVNKRTASAVIINTASCLESLSLSWLQQELGIPVYPLGPLHITASSPGPSLLQEDMSCIEWLNKQKPRSVIYISLGTKAHMETKEMLEMAWGLLNSNQPFLWVIRPGSVAGFEWIELLPEEVIKMVTERGYIAKWAPQIEVLGHPAVGGFWSHCGWNSTLESIVEGVPMICRPLQGEQKLNAMYIESVWKIGIQLEGEVEREGVERAVKRLIIDEEGAAMRERALDLKEKLNASVRSGGSSYNALDELVKFLNTE.

UDP-alpha-D-glucose contacts are provided by residues threonine 274, 333–335 (APQ), 350–358 (HCGWNSTLE), and 372–375 (QGEQ).

Belongs to the UDP-glycosyltransferase family.

This Arabidopsis thaliana (Mouse-ear cress) protein is UDP-glycosyltransferase 76E4 (UGT76E4).